The primary structure comprises 306 residues: Methylated RNA-binding protein 1 (306 aa).

A YTH domain is found at 155–290; that stretch reads SRFFVIKSSS…SIGISIINLF (136 aa). RNA-binding positions include 161–163, Asn-207, and Trp-231; that span reads KSS.

RNA-binding protein that acts as a post-transcriptional regulator of phosphate metabolism by binding to the 3'-UTR region of PHO4 mRNA, decreasing its stability. Acts by recognizing and binding N6-methyladenosine (m6A)-containing RNAs, a modification present at internal sites of mRNAs and some non-coding RNAs. In Saccharomyces cerevisiae (strain ATCC 204508 / S288c) (Baker's yeast), this protein is Methylated RNA-binding protein 1.